The primary structure comprises 260 residues: Thiazole synthase (260 aa).

Lysine 96 acts as the Schiff-base intermediate with DXP in catalysis. 1-deoxy-D-xylulose 5-phosphate contacts are provided by residues glycine 157, 184–185, and 206–207; these read AG and NT.

Belongs to the ThiG family. In terms of assembly, homotetramer. Forms heterodimers with either ThiH or ThiS.

It localises to the cytoplasm. It catalyses the reaction [ThiS sulfur-carrier protein]-C-terminal-Gly-aminoethanethioate + 2-iminoacetate + 1-deoxy-D-xylulose 5-phosphate = [ThiS sulfur-carrier protein]-C-terminal Gly-Gly + 2-[(2R,5Z)-2-carboxy-4-methylthiazol-5(2H)-ylidene]ethyl phosphate + 2 H2O + H(+). It functions in the pathway cofactor biosynthesis; thiamine diphosphate biosynthesis. Its function is as follows. Catalyzes the rearrangement of 1-deoxy-D-xylulose 5-phosphate (DXP) to produce the thiazole phosphate moiety of thiamine. Sulfur is provided by the thiocarboxylate moiety of the carrier protein ThiS. In vitro, sulfur can be provided by H(2)S. The polypeptide is Thiazole synthase (Rhodopseudomonas palustris (strain BisA53)).